We begin with the raw amino-acid sequence, 492 residues long: Gamma-aminobutyric acid receptor subunit alpha-3 (492 aa).

The first 28 residues, 1-28, serve as a signal peptide directing secretion; the sequence is MIITQMSQFYMAGLGLLFLINILPGTTG. Topologically, residues 29 to 274 are extracellular; it reads QVESRRQEPG…MTTHFHLKRK (246 aa). Residue N63 is glycosylated (N-linked (GlcNAc...) asparagine). A 4-aminobutanoate-binding site is contributed by R119. Residues N163 and N176 are each glycosylated (N-linked (GlcNAc...) asparagine). T182 serves as a coordination point for 4-aminobutanoate. A disulfide bridge connects residues C191 and C205. N228 carries N-linked (GlcNAc...) asparagine glycosylation. The chain crosses the membrane as a helical span at residues 275-295; it reads IGYFVIQTYLPCIMTVILSQV. Residues 296–305 are Cytoplasmic-facing; that stretch reads SFWLNRESVP. The chain crosses the membrane as a helical span at residues 306-325; it reads ARTVFGVTTVLTMTTLSISA. Residues 326–336 lie on the Extracellular side of the membrane; sequence RNSLPKVAYAT. The chain crosses the membrane as a helical span at residues 337 to 357; sequence AMDWFMAVCYAFVFSALIEFA. Topologically, residues 358–457 are cytoplasmic; it reads TVNYFTKRSW…TYNSVSKVDK (100 aa). At S426 the chain carries Phosphoserine. At T427 the chain carries Phosphothreonine. S433 is subject to Phosphoserine. The helical transmembrane segment at 458 to 478 threads the bilayer; that stretch reads ISRIIFPVLFAIFNLVYWATY. Topologically, residues 479–492 are extracellular; the sequence is VNRESAIKGMIRKQ.

It belongs to the ligand-gated ion channel (TC 1.A.9) family. Gamma-aminobutyric acid receptor (TC 1.A.9.5) subfamily. GABRA3 sub-subfamily. In terms of assembly, heteropentamer, formed by a combination of alpha (GABRA1-6), beta (GABRB1-3), gamma (GABRG1-3), delta (GABRD), epsilon (GABRE), rho (GABRR1-3), pi (GABRP) and theta (GABRQ) chains, each subunit exhibiting distinct physiological and pharmacological properties. Binds UBQLN1. Interacts with GPHN.

It localises to the postsynaptic cell membrane. It is found in the cell membrane. It catalyses the reaction chloride(in) = chloride(out). Alpha subunit of the heteropentameric ligand-gated chloride channel gated by gamma-aminobutyric acid (GABA), a major inhibitory neurotransmitter in the brain. GABA-gated chloride channels, also named GABA(A) receptors (GABAAR), consist of five subunits arranged around a central pore and contain GABA active binding site(s) located at the alpha and beta subunit interface(s). When activated by GABA, GABAARs selectively allow the flow of chloride anions across the cell membrane down their electrochemical gradient. Chloride influx into the postsynaptic neuron following GABAAR opening decreases the neuron ability to generate a new action potential, thereby reducing nerve transmission. The sequence is that of Gamma-aminobutyric acid receptor subunit alpha-3 (GABRA3) from Bos taurus (Bovine).